A 288-amino-acid chain; its full sequence is Quinate/shikimate dehydrogenase (288 aa).

Substrate contacts are provided by Lys71 and Asp107. NAD(+) is bound by residues Ala132 to Ala135, Asn155 to Asp158, Lys205, Cys232 to Asn235, and Gly255.

This sequence belongs to the shikimate dehydrogenase family. Homodimer.

It catalyses the reaction L-quinate + NAD(+) = 3-dehydroquinate + NADH + H(+). The catalysed reaction is L-quinate + NADP(+) = 3-dehydroquinate + NADPH + H(+). The enzyme catalyses shikimate + NADP(+) = 3-dehydroshikimate + NADPH + H(+). It carries out the reaction shikimate + NAD(+) = 3-dehydroshikimate + NADH + H(+). Its pathway is metabolic intermediate biosynthesis; chorismate biosynthesis; chorismate from D-erythrose 4-phosphate and phosphoenolpyruvate: step 4/7. Its function is as follows. The actual biological function of YdiB remains unclear, nor is it known whether 3-dehydroshikimate or quinate represents the natural substrate. Catalyzes the reversible NAD-dependent reduction of both 3-dehydroshikimate (DHSA) and 3-dehydroquinate to yield shikimate (SA) and quinate, respectively. It can use both NAD or NADP for catalysis, however it has higher catalytic efficiency with NAD. This chain is Quinate/shikimate dehydrogenase, found in Escherichia coli O17:K52:H18 (strain UMN026 / ExPEC).